The sequence spans 237 residues: Ly6/PLAUR domain-containing protein 8 (237 aa).

Positions 1–19 (MKGILVAGITAVLVAAVES) are cleaved as a signal peptide. 8 N-linked (GlcNAc...) asparagine glycosylation sites follow: Asn-45, Asn-73, Asn-107, Asn-118, Asn-132, Asn-172, Asn-175, and Asn-185. One can recognise a UPAR/Ly6 domain in the interval 125–176 (CPACYESNGTSCHGKPWKCYEEEQCVFLVAELKNDIESKSLVLKGCSNVSNA). The GPI-anchor amidated asparagine moiety is linked to residue Asn-215. A propeptide spans 216-237 (VGSKASLYLLALASLLLRGLLP) (removed in mature form).

It belongs to the CNF-like-inhibitor family. Post-translationally, highly N-glycosylated. Not O-glycosylated. GPI-anchored. The GPI-anchor is cleaved, leading to secretion into the colonic lumen. As to expression, expressed in the large intestine. Preferentially expressed on the epithelial layer exposed to the lumen (at protein level).

It is found in the cell membrane. The protein resides in the secreted. In terms of biological role, secreted protein specifically required to prevent invasion of Gram-negative bacteria in the inner mucus layer of the colon epithelium, a portion of the large intestine which is free of commensal microbiota. Prevents invasion of flagellated microbiota by binding to the flagellum of bacteria, such as P.mirabilis, thereby inhibiting bacterial motility in the intestinal lumen. Segregation of intestinal bacteria and epithelial cells in the colon is required to preserve intestinal homeostasis. The polypeptide is Ly6/PLAUR domain-containing protein 8 (Homo sapiens (Human)).